The chain runs to 338 residues: MRRLNRKNNEALKKLNDRQRKVLYCIVREYIENKKPVSSQRVLEVSNIEFSSATIRNDMKKLEYLGYIYQPHTSAGRIPTDKGLRFYYEEMLKISKETSEADLAVETFKSMPLADPEKVLFLAGNLLARLTEGYVLIERPNTRDLKILRVMLIPVSEDYLIFSILTEFGVSKVTPIKTQERLNWEEIERQLNFLLRGRTVGEVLMGKIESLKGSGFLRLIESLIGETVERYLDAGLENLLKDETLTLEDIRNLLEEVKDQKFLESLVGEGITVRIGREIGRKKLEKFAVFSGKYFKGESPIGSVYLFTSKVTKYDRNHRVFEYILNRLSEYFTSTSRR.

The protein belongs to the HrcA family.

In terms of biological role, negative regulator of class I heat shock genes (grpE-dnaK-dnaJ and groELS operons). Prevents heat-shock induction of these operons. The sequence is that of Heat-inducible transcription repressor HrcA from Thermotoga maritima (strain ATCC 43589 / DSM 3109 / JCM 10099 / NBRC 100826 / MSB8).